The following is a 390-amino-acid chain: Endonuclease 8-like 1 (390 aa).

Residue Pro-2 is the Schiff-base intermediate with DNA of the active site. The active-site Proton donor is the Glu-3. The active-site Proton donor; for beta-elimination activity is the Lys-54. Asn-176 provides a ligand contact to DNA. The segment at 278-390 (TIWFQGDPGP…SLEPEGTSAS (113 aa)) is disordered. The segment covering 291–301 (KGRKSRKKKSK) has biased composition (basic residues). Positions 335–347 (TATQRPEGTSLQQ) are enriched in polar residues. DNA is bound at residue Arg-339. Arg-339 (proton donor; for delta-elimination activity) is an active-site residue.

This sequence belongs to the FPG family. In terms of tissue distribution, ubiquitous.

The protein resides in the cytoplasm. It localises to the cytoskeleton. Its subcellular location is the microtubule organizing center. The protein localises to the centrosome. It is found in the nucleus. The protein resides in the chromosome. It carries out the reaction 2'-deoxyribonucleotide-(2'-deoxyribose 5'-phosphate)-2'-deoxyribonucleotide-DNA = a 3'-end 2'-deoxyribonucleotide-(2,3-dehydro-2,3-deoxyribose 5'-phosphate)-DNA + a 5'-end 5'-phospho-2'-deoxyribonucleoside-DNA + H(+). Its function is as follows. Involved in base excision repair of DNA damaged by oxidation or by mutagenic agents. Acts as a DNA glycosylase that recognizes and removes damaged bases. Has a preference for oxidized pyrimidines, such as thymine glycol, formamidopyrimidine (Fapy) and 5-hydroxyuracil. Has marginal activity towards 8-oxoguanine. Has AP (apurinic/apyrimidinic) lyase activity and introduces nicks in the DNA strand. Cleaves the DNA backbone by beta-delta elimination to generate a single-strand break at the site of the removed base with both 3'- and 5'-phosphates. Has DNA glycosylase/lyase activity towards mismatched uracil and thymine, in particular in U:C and T:C mismatches. Specifically binds 5-hydroxymethylcytosine (5hmC), suggesting that it acts as a specific reader of 5hmC. The sequence is that of Endonuclease 8-like 1 (NEIL1) from Homo sapiens (Human).